The chain runs to 273 residues: Dermonecrotic toxin LsaSicTox-alphaIB1aiii (273 aa).

His-5 is a catalytic residue. 2 residues coordinate Mg(2+): Glu-25 and Asp-27. His-41 serves as the catalytic Nucleophile. Cystine bridges form between Cys-45-Cys-51 and Cys-47-Cys-190. A Mg(2+)-binding site is contributed by Asp-85.

It belongs to the arthropod phospholipase D family. Class II subfamily. Mg(2+) is required as a cofactor. In terms of tissue distribution, expressed by the venom gland.

The protein resides in the secreted. The enzyme catalyses an N-(acyl)-sphingosylphosphocholine = an N-(acyl)-sphingosyl-1,3-cyclic phosphate + choline. It catalyses the reaction an N-(acyl)-sphingosylphosphoethanolamine = an N-(acyl)-sphingosyl-1,3-cyclic phosphate + ethanolamine. The catalysed reaction is a 1-acyl-sn-glycero-3-phosphocholine = a 1-acyl-sn-glycero-2,3-cyclic phosphate + choline. It carries out the reaction a 1-acyl-sn-glycero-3-phosphoethanolamine = a 1-acyl-sn-glycero-2,3-cyclic phosphate + ethanolamine. Functionally, dermonecrotic toxins cleave the phosphodiester linkage between the phosphate and headgroup of certain phospholipids (sphingolipid and lysolipid substrates), forming an alcohol (often choline) and a cyclic phosphate. This toxin acts on sphingomyelin (SM). It may also act on ceramide phosphoethanolamine (CPE), lysophosphatidylcholine (LPC) and lysophosphatidylethanolamine (LPE), but not on lysophosphatidylserine (LPS), and lysophosphatidylglycerol (LPG). It acts by transphosphatidylation, releasing exclusively cyclic phosphate products as second products. Induces dermonecrosis, hemolysis, increased vascular permeability, edema, inflammatory response, and platelet aggregation. The sequence is that of Dermonecrotic toxin LsaSicTox-alphaIB1aiii from Loxosceles sabina (Tucson recluse spider).